Reading from the N-terminus, the 498-residue chain is ATP synthase subunit beta, chloroplastic (498 aa).

Gly172–Thr179 contacts ATP.

The protein belongs to the ATPase alpha/beta chains family. F-type ATPases have 2 components, CF(1) - the catalytic core - and CF(0) - the membrane proton channel. CF(1) has five subunits: alpha(3), beta(3), gamma(1), delta(1), epsilon(1). CF(0) has four main subunits: a(1), b(1), b'(1) and c(9-12).

The protein resides in the plastid. It localises to the chloroplast thylakoid membrane. It carries out the reaction ATP + H2O + 4 H(+)(in) = ADP + phosphate + 5 H(+)(out). Functionally, produces ATP from ADP in the presence of a proton gradient across the membrane. The catalytic sites are hosted primarily by the beta subunits. The sequence is that of ATP synthase subunit beta, chloroplastic from Illicium oligandrum (Star anise).